Reading from the N-terminus, the 128-residue chain is Probable 4-amino-4-deoxy-L-arabinose-phosphoundecaprenol flippase subunit ArnF (128 aa).

At 1–10 (MKGYLWGGAS) the chain is on the cytoplasmic side. The helical transmembrane segment at 11 to 31 (VVLVTVAQLVLKWGMMNIPLL) threads the bilayer. The Periplasmic portion of the chain corresponds to 32-47 (SLADINVQFLTMYFVQ). A helical transmembrane segment spans residues 48 to 68 (LASVMCGLMGYALSMLCWFFA). Residues 69 to 77 (LRYLPLNRA) lie on the Cytoplasmic side of the membrane. Residues 78-98 (YPLLSLSYALVYLGAVLLPWF) form a helical membrane-spanning segment. The Periplasmic portion of the chain corresponds to 99–101 (NEP). The chain crosses the membrane as a helical span at residues 102 to 122 (ATLLKTLGAGFILLGIWLINI). At 123-128 (KPIKAS) the chain is on the cytoplasmic side.

It belongs to the ArnF family. Heterodimer of ArnE and ArnF.

It localises to the cell inner membrane. It participates in bacterial outer membrane biogenesis; lipopolysaccharide biosynthesis. Its function is as follows. Translocates 4-amino-4-deoxy-L-arabinose-phosphoundecaprenol (alpha-L-Ara4N-phosphoundecaprenol) from the cytoplasmic to the periplasmic side of the inner membrane. The sequence is that of Probable 4-amino-4-deoxy-L-arabinose-phosphoundecaprenol flippase subunit ArnF from Yersinia pseudotuberculosis serotype O:1b (strain IP 31758).